Here is a 647-residue protein sequence, read N- to C-terminus: Exoribonuclease 2 (647 aa).

An RNB domain is found at 192 to 519 (RIDLTSLDFV…NHRLLKAIIQ (328 aa)). Residues 564 to 646 (EQRFTAEIID…ETRNIVARPT (83 aa)) form the S1 motif domain.

The protein belongs to the RNR ribonuclease family. RNase II subfamily.

It is found in the cytoplasm. The enzyme catalyses Exonucleolytic cleavage in the 3'- to 5'-direction to yield nucleoside 5'-phosphates.. In terms of biological role, involved in mRNA degradation. Hydrolyzes single-stranded polyribonucleotides processively in the 3' to 5' direction. This chain is Exoribonuclease 2, found in Photorhabdus laumondii subsp. laumondii (strain DSM 15139 / CIP 105565 / TT01) (Photorhabdus luminescens subsp. laumondii).